We begin with the raw amino-acid sequence, 266 residues long: Non-structural maintenance of chromosomes element 1 homolog (266 aa).

The interaction with NSMCE3 stretch occupies residues 1–102 (MQGSTRRAGA…SVSKMATDFA (102 aa)). The RING-type; atypical zinc-finger motif lies at 191–232 (CNICHGLLIQGQSCETCGIRMHLPCVAKYFQSIPEPHCPHCN). Residues 246-266 (EKEREAGISKSSRKSLRTRQH) form a disordered region. The span at 256–266 (SSRKSLRTRQH) shows a compositional bias: basic residues.

The protein belongs to the NSE1 family. Component of the SMC5-SMC6 complex which consists at least of SMC5, SMC6, NSMCE2, NSMCE1, NSMCE4A or EID3 and NSMCE3. NSMCE1, NSMCE4A or EID3 and NSMCE3 probably form a subcomplex that bridges the head domains of the SMC5-SMC6 heterodimer. Interacts with NSMCE3. Ubiquitinated.

It localises to the nucleus. Its subcellular location is the chromosome. The protein localises to the telomere. It catalyses the reaction S-ubiquitinyl-[E2 ubiquitin-conjugating enzyme]-L-cysteine + [acceptor protein]-L-lysine = [E2 ubiquitin-conjugating enzyme]-L-cysteine + N(6)-ubiquitinyl-[acceptor protein]-L-lysine.. Its function is as follows. RING-type zinc finger-containing E3 ubiquitin ligase that assembles with melanoma antigen protein (MAGE) to catalyze the direct transfer of ubiquitin from E2 ubiquitin-conjugating enzyme to a specific substrate. Within MAGE-RING ubiquitin ligase complex, MAGE stimulates and specifies ubiquitin ligase activity likely through recruitment and/or stabilization of the E2 ubiquitin-conjugating enzyme at the E3:substrate complex. Involved in maintenance of genome integrity, DNA damage response and DNA repair. NSMCE3/MAGEG1 and NSMCE1 ubiquitin ligase are components of SMC5-SMC6 complex and may positively regulate homologous recombination-mediated DNA repair. This chain is Non-structural maintenance of chromosomes element 1 homolog (Nsmce1), found in Mus musculus (Mouse).